A 436-amino-acid polypeptide reads, in one-letter code: DEAD-box ATP-dependent RNA helicase CshB (436 aa).

A Q motif motif is present at residues 4–32; the sequence is QTFTQYDFKPFLIDAVRELRFTEPTGIQQ. The Helicase ATP-binding domain occupies 35-209; that stretch reads FPVVKKGVSV…KKYMENPEHI (175 aa). Position 48–55 (48–55) interacts with ATP; sequence SQTGSGKT. The DEAD box signature appears at 157–160; sequence DEAD. The Helicase C-terminal domain occupies 240-388; the sequence is MLLQFKPYLA…WADLGERRRR (149 aa). Positions 385-436 are disordered; that stretch reads RRRRKSRKKPNDELDVMATKVIKKPKKVKPNYKRKLATERDKVKRKYSNKKR. Basic residues-rich tracts occupy residues 405 to 419 and 427 to 436; these read VIKKPKKVKPNYKRK and VKRKYSNKKR.

The protein belongs to the DEAD box helicase family. CshB subfamily.

Its subcellular location is the cytoplasm. It catalyses the reaction ATP + H2O = ADP + phosphate + H(+). Functionally, probable DEAD-box RNA helicase. May work in conjunction with the cold shock proteins to ensure proper initiation of transcription at low and optimal temperatures. Unwinds dsRNA in both 5'- and 3'-directions and shows RNA-dependent ATPase activity. Probably has a somewhat redundant function with CshA, as cshA can partially complement the growth effects of a cshB deletion. The polypeptide is DEAD-box ATP-dependent RNA helicase CshB (Bacillus cereus (strain ATCC 14579 / DSM 31 / CCUG 7414 / JCM 2152 / NBRC 15305 / NCIMB 9373 / NCTC 2599 / NRRL B-3711)).